Consider the following 488-residue polypeptide: Wax ester synthase/diacylglycerol acyltransferase 8 (488 aa).

Topologically, residues 1-195 (MKNEEEEPLS…AIFTIGSTMR (195 aa)) are cytoplasmic. The active-site Proton acceptor is His135. A helical membrane pass occupies residues 196–214 (LIWNTLVDMFLLFATMLFL). The Lumenal portion of the chain corresponds to 215–488 (KDTKTPLKGG…RGLLKEAYKV (274 aa)). Asn238, Asn252, Asn353, and Asn397 each carry an N-linked (GlcNAc...) asparagine glycan.

In the N-terminal section; belongs to the long-chain O-acyltransferase family. In terms of tissue distribution, mostly expressed in flowers and siliques and at low levels in stems.

Its subcellular location is the cell membrane. It localises to the endoplasmic reticulum membrane. The enzyme catalyses an acyl-CoA + a 1,2-diacyl-sn-glycerol = a triacyl-sn-glycerol + CoA. It catalyses the reaction a long chain fatty alcohol + a fatty acyl-CoA = a wax ester + CoA. It participates in glycerolipid metabolism; triacylglycerol biosynthesis. Its pathway is lipid metabolism. In terms of biological role, bifunctional wax ester synthase/diacylglycerol acyltransferase. Involved in cuticular wax biosynthesis. The protein is Wax ester synthase/diacylglycerol acyltransferase 8 of Arabidopsis thaliana (Mouse-ear cress).